Consider the following 253-residue polypeptide: 5-oxoprolinase subunit A (253 aa).

The protein belongs to the LamB/PxpA family. In terms of assembly, forms a complex composed of PxpA, PxpB and PxpC.

It catalyses the reaction 5-oxo-L-proline + ATP + 2 H2O = L-glutamate + ADP + phosphate + H(+). Functionally, catalyzes the cleavage of 5-oxoproline to form L-glutamate coupled to the hydrolysis of ATP to ADP and inorganic phosphate. This is 5-oxoprolinase subunit A from Bacillus anthracis (strain CDC 684 / NRRL 3495).